A 234-amino-acid polypeptide reads, in one-letter code: Large ribosomal subunit protein uL1 (234 aa).

It belongs to the universal ribosomal protein uL1 family. Part of the 50S ribosomal subunit.

Its function is as follows. Binds directly to 23S rRNA. The L1 stalk is quite mobile in the ribosome, and is involved in E site tRNA release. Functionally, protein L1 is also a translational repressor protein, it controls the translation of the L11 operon by binding to its mRNA. The polypeptide is Large ribosomal subunit protein uL1 (Prochlorococcus marinus (strain SARG / CCMP1375 / SS120)).